The chain runs to 1267 residues: Eukaryotic translation initiation factor 3 subunit A (1267 aa).

Positions 82 to 118 (NIKSLEDVVRAYLKLAEEKTETAKEESQQMVLDIEDL) form a coiled coil. The 184-residue stretch at 315 to 498 (MQRMSTRVLL…RTLSFGSDLN (184 aa)) folds into the PCI domain. 3 stretches are compositionally biased toward basic and acidic residues: residues 792–835 (EERK…LEQE), 844–1086 (YQER…DSRP), and 1098–1147 (WRER…EGSA). The tract at residues 792-1267 (EERKKQRKED…DDDGWTTVRR (476 aa)) is disordered. 3 tandem repeats follow at residues 956–965 (DDDRGPRRGG), 966–975 (DDERPPRRGF), and 976–985 (DDDRGTRRGF). The tract at residues 956–1073 (DDDRGPRRGG…DDERGGRRGM (118 aa)) is 12 X 10 AA approximate tandem repeats of D-[DE]-[DE]-R-[GP]-[GPQT]-R-R-[GPS]-[ADFGIM]. The stretch at 986 to 994 (DDDRGQRRG) is one 4; truncated repeat. 2 tandem repeats follow at residues 995 to 1004 (DDDRGPRRGM) and 1005 to 1014 (DDDRGPRRPI). The stretch at 1015-1023 (DDDRGPRRS) is one 7; truncated repeat. 2 repeat units span residues 1024-1033 (DDDRGPRRGF) and 1034-1043 (DDDRGPRRGM). The stretch at 1044 to 1053 (DEPRGPRRGA) is one 10; approximate repeat. Repeat unit 11 spans residues 1054–1063 (DDDWGPRRGG). Residues 1064-1073 (DDERGGRRGM) form a 12; approximate repeat. Residues 1150-1159 (RGGGGGGGGE) are compositionally biased toward gly residues. Residues 1162-1256 (SSWRDSRRED…KENPRRTKNE (95 aa)) are compositionally biased toward basic and acidic residues.

It belongs to the eIF-3 subunit A family. In terms of assembly, component of the eukaryotic translation initiation factor 3 (eIF-3) complex, which is composed of 13 subunits: eif3a, eif3b, eif3c, eif3d, eif3e, eif3f, eif3g, eif3h, eif3i, eif3j, eif3k, eif3l and eif3m.

It is found in the cytoplasm. RNA-binding component of the eukaryotic translation initiation factor 3 (eIF-3) complex, which is involved in protein synthesis of a specialized repertoire of mRNAs and, together with other initiation factors, stimulates binding of mRNA and methionyl-tRNAi to the 40S ribosome. The eIF-3 complex specifically targets and initiates translation of a subset of mRNAs involved in cell proliferation. The chain is Eukaryotic translation initiation factor 3 subunit A (eif3a) from Danio rerio (Zebrafish).